We begin with the raw amino-acid sequence, 309 residues long: Tagatose-6-phosphate kinase (309 aa).

The protein belongs to the carbohydrate kinase PfkB family. LacC subfamily.

The catalysed reaction is D-tagatofuranose 6-phosphate + ATP = D-tagatofuranose 1,6-bisphosphate + ADP + H(+). Its pathway is carbohydrate metabolism; D-tagatose 6-phosphate degradation; D-glyceraldehyde 3-phosphate and glycerone phosphate from D-tagatose 6-phosphate: step 1/2. The chain is Tagatose-6-phosphate kinase from Streptococcus pyogenes serotype M18 (strain MGAS8232).